The sequence spans 105 residues: Large ribosomal subunit protein bL21 (105 aa).

This sequence belongs to the bacterial ribosomal protein bL21 family. As to quaternary structure, part of the 50S ribosomal subunit. Contacts protein L20.

Functionally, this protein binds to 23S rRNA in the presence of protein L20. This Methylobacterium nodulans (strain LMG 21967 / CNCM I-2342 / ORS 2060) protein is Large ribosomal subunit protein bL21.